A 70-amino-acid polypeptide reads, in one-letter code: Large ribosomal subunit protein bL31 (70 aa).

Cys-16, Cys-18, Cys-37, and Cys-40 together coordinate Zn(2+).

Belongs to the bacterial ribosomal protein bL31 family. Type A subfamily. As to quaternary structure, part of the 50S ribosomal subunit. Zn(2+) serves as cofactor.

In terms of biological role, binds the 23S rRNA. The sequence is that of Large ribosomal subunit protein bL31 from Shewanella denitrificans (strain OS217 / ATCC BAA-1090 / DSM 15013).